We begin with the raw amino-acid sequence, 274 residues long: Outer surface protein A (274 aa).

Residues 1-16 (MKKYLLGIGLILALIA) form the signal peptide. Cys17 is lipidated: N-palmitoyl cysteine. Residue Cys17 is the site of S-diacylglycerol cysteine attachment.

It belongs to the OspA lipoprotein family.

The protein resides in the cell outer membrane. It is found in the cell surface. In Borreliella burgdorferi (Lyme disease spirochete), this protein is Outer surface protein A.